Consider the following 267-residue polypeptide: Phosphatidylglycerol--prolipoprotein diacylglyceryl transferase (267 aa).

The next 4 helical transmembrane spans lie at 10-30 (VAIALGPFKVHWYGLMYVVGF), 54-74 (LLFYGALGVVLGGRVGYALFY), 90-110 (WDGGMSFHGGLIGVLIAAWLF), and 116-136 (LAFFQLTDFVAPLVPLGLGAG). Arg137 contacts a 1,2-diacyl-sn-glycero-3-phospho-(1'-sn-glycerol). 3 consecutive transmembrane segments (helical) span residues 169–189 (PSPLYEFALEGVVMFVVLWWV), 197–217 (GMISGLFLLLYAVFRFSVEFV), and 231–251 (WLTMGQLLTVPMALAGIALCV).

It belongs to the Lgt family.

It localises to the cell inner membrane. The catalysed reaction is L-cysteinyl-[prolipoprotein] + a 1,2-diacyl-sn-glycero-3-phospho-(1'-sn-glycerol) = an S-1,2-diacyl-sn-glyceryl-L-cysteinyl-[prolipoprotein] + sn-glycerol 1-phosphate + H(+). It participates in protein modification; lipoprotein biosynthesis (diacylglyceryl transfer). Catalyzes the transfer of the diacylglyceryl group from phosphatidylglycerol to the sulfhydryl group of the N-terminal cysteine of a prolipoprotein, the first step in the formation of mature lipoproteins. This Chromohalobacter salexigens (strain ATCC BAA-138 / DSM 3043 / CIP 106854 / NCIMB 13768 / 1H11) protein is Phosphatidylglycerol--prolipoprotein diacylglyceryl transferase.